Reading from the N-terminus, the 199-residue chain is UPF0637 protein LACR_1918 (199 aa).

Belongs to the UPF0637 family.

In Lactococcus lactis subsp. cremoris (strain SK11), this protein is UPF0637 protein LACR_1918.